The following is a 232-amino-acid chain: Large ribosomal subunit protein uL1 (232 aa).

The protein belongs to the universal ribosomal protein uL1 family. In terms of assembly, part of the 50S ribosomal subunit.

Binds directly to 23S rRNA. The L1 stalk is quite mobile in the ribosome, and is involved in E site tRNA release. In terms of biological role, protein L1 is also a translational repressor protein, it controls the translation of the L11 operon by binding to its mRNA. The chain is Large ribosomal subunit protein uL1 from Methylorubrum populi (strain ATCC BAA-705 / NCIMB 13946 / BJ001) (Methylobacterium populi).